A 343-amino-acid polypeptide reads, in one-letter code: S-adenosylmethionine:tRNA ribosyltransferase-isomerase (343 aa).

It belongs to the QueA family. Monomer.

It localises to the cytoplasm. The catalysed reaction is 7-aminomethyl-7-carbaguanosine(34) in tRNA + S-adenosyl-L-methionine = epoxyqueuosine(34) in tRNA + adenine + L-methionine + 2 H(+). Its pathway is tRNA modification; tRNA-queuosine biosynthesis. Transfers and isomerizes the ribose moiety from AdoMet to the 7-aminomethyl group of 7-deazaguanine (preQ1-tRNA) to give epoxyqueuosine (oQ-tRNA). The chain is S-adenosylmethionine:tRNA ribosyltransferase-isomerase from Geotalea uraniireducens (strain Rf4) (Geobacter uraniireducens).